A 464-amino-acid polypeptide reads, in one-letter code: UDP-N-acetylmuramoyl-tripeptide--D-alanyl-D-alanine ligase (464 aa).

125–131 lines the ATP pocket; the sequence is GSNGKTT.

It belongs to the MurCDEF family. MurF subfamily.

It localises to the cytoplasm. The enzyme catalyses D-alanyl-D-alanine + UDP-N-acetyl-alpha-D-muramoyl-L-alanyl-gamma-D-glutamyl-meso-2,6-diaminopimelate + ATP = UDP-N-acetyl-alpha-D-muramoyl-L-alanyl-gamma-D-glutamyl-meso-2,6-diaminopimeloyl-D-alanyl-D-alanine + ADP + phosphate + H(+). It functions in the pathway cell wall biogenesis; peptidoglycan biosynthesis. In terms of biological role, involved in cell wall formation. Catalyzes the final step in the synthesis of UDP-N-acetylmuramoyl-pentapeptide, the precursor of murein. This is UDP-N-acetylmuramoyl-tripeptide--D-alanyl-D-alanine ligase from Borreliella burgdorferi (strain ATCC 35210 / DSM 4680 / CIP 102532 / B31) (Borrelia burgdorferi).